The following is a 367-amino-acid chain: Cell-death-related nuclease 7 (367 aa).

The signal sequence occupies residues 1 to 18 (MRLYFVLIFSVIFTTGNG). Asn253 carries an N-linked (GlcNAc...) asparagine glycan.

Belongs to the DNase II family.

This chain is Cell-death-related nuclease 7 (crn-7), found in Caenorhabditis elegans.